The following is a 329-amino-acid chain: Prostaglandin reductase 1 (329 aa).

Phosphothreonine is present on Thr18. Position 20 is a phosphoserine (Ser20). Residues 152–155 (GAVG), Lys178, Tyr193, Asn217, 239–245 (CGAISTY), 270–272 (FIV), and Asn321 contribute to the NADP(+) site. N6-(2-hydroxyisobutyryl)lysine; alternate is present on Lys178. Lys178 carries the post-translational modification N6-acetyllysine; alternate.

This sequence belongs to the NADP-dependent oxidoreductase L4BD family. In terms of assembly, monomer or homodimer. In terms of tissue distribution, ubiquitously distributed in various tissues and leukocytes, the kidney and liver had the highest enzyme activities.

It localises to the cytoplasm. It catalyses the reaction 13,14-dihydro-15-oxo-prostaglandin E1 + NADP(+) = 15-oxoprostaglandin E1 + NADPH + H(+). The catalysed reaction is 13,14-dihydro-15-oxo-prostaglandin E2 + NADP(+) = 15-oxoprostaglandin E2 + NADPH + H(+). It carries out the reaction 13,14-dihydro-15-oxo-prostaglandin E2 + NAD(+) = 15-oxoprostaglandin E2 + NADH + H(+). The enzyme catalyses 13,14-dihydro-15-oxo-prostaglandin F1alpha + NADP(+) = 15-oxoprostaglandin F1alpha + NADPH + H(+). It catalyses the reaction 13,14-dihydro-15-oxo-PGF2alpha + NADP(+) = 15-oxoprostaglandin F2alpha + NADPH + H(+). The catalysed reaction is leukotriene B4 + NADP(+) = 12-oxo-leukotriene B4 + NADPH + H(+). It carries out the reaction 20-hydroxy-leukotriene B4 + NADP(+) = 12-oxo-20-hydroxy-leukotriene B4 + NADPH + H(+). The enzyme catalyses 6-trans-leukotriene B4 + NADP(+) = 12-oxo-(5S)-hydroxy-(6E,8E,10E,14Z)-eicosatetraenoate + NADPH + H(+). It catalyses the reaction (5S,12S)-dihydroxy-(6E,10E,12E,14Z)-eicosatetraenoate + NADP(+) = 12-oxo-(5S)-hydroxy-(6E,8E,10E,14Z)-eicosatetraenoate + NADPH + H(+). The catalysed reaction is 15-oxo-(5S,6R)-dihydroxy-(7E,9E,11Z,13E)-eicosatetraenoate + NADH + H(+) = 15-oxo-(5S,6R)-dihydroxy-(7E,9E,11Z)-eicosatrienoate + NAD(+). It carries out the reaction an n-alkanal + NADP(+) = an alk-2-enal + NADPH + H(+). The enzyme catalyses hexanal + NADP(+) = (E)-hex-2-enal + NADPH + H(+). It catalyses the reaction octanal + NADP(+) = (2E)-octenal + NADPH + H(+). The catalysed reaction is decanal + NADP(+) = (2E)-decenal + NADPH + H(+). It carries out the reaction dodecanal + NADP(+) = (2E)-dodecenal + NADPH + H(+). The enzyme catalyses 4-hydroxynonanal + NADP(+) = (E)-4-hydroxynon-2-enal + NADPH + H(+). It catalyses the reaction pentan-2-one + NADP(+) = (E)-pent-3-en-2-one + NADPH + H(+). The catalysed reaction is nonan-2-one + NADP(+) = (3E)-nonen-2-one + NADPH + H(+). With respect to regulation, down-regulated by nonsteroidal anti-inflammatory drugs diclofenac, indomethacin and niflumic acid. NAD(P)H-dependent oxidoreductase involved in metabolic inactivation of pro- and anti-inflammatory eicosanoids: prostaglandins (PG), leukotrienes (LT) and lipoxins (LX). Preferentially uses NADPH over NADH as cofactor. Catalyzes with high efficiency the reduction of the 13,14 double bond of 15-oxoPGs, including 15-oxo-PGE1, 15-oxo-PGE2, 15-oxo-PGF1-alpha and 15-oxo-PGF2-alpha. Catalyzes with lower efficiency the oxidation of the hydroxyl group at C12 of LTB4 and its derivatives, converting them into biologically less active 12-oxo-LTB4 metabolites. Reduces 15-oxo-LXA4 to 13,14 dihydro-15-oxo-LXA4 and may promote neutrophil recruitment at the inflammatory site. Plays a role in metabolic detoxification of alkenals and ketones. Reduces alpha,beta-unsaturated alkenals and ketones, particularly those with medium-chain length, showing highest affinity toward (2E)-decenal and (3E)-3-nonen-2-one. May inactivate 4-hydroxy-2-nonenal, a cytotoxic lipid constituent of oxidized low-density lipoprotein particles. The sequence is that of Prostaglandin reductase 1 (PTGR1) from Sus scrofa (Pig).